Here is a 957-residue protein sequence, read N- to C-terminus: Melanoma-associated antigen E1 (957 aa).

A disordered region spans residues 1–433; that stretch reads MSLVSQNSRR…RNPSKCSIVL (433 aa). 2 stretches are compositionally biased toward polar residues: residues 85-96 and 104-130; these read SEASSASGQPTV and LLAT…SVTL. Residues 138–156 show a composition bias toward low complexity; that stretch reads TSRPPTSSEEPSTSVPATP. Polar residues-rich tracts occupy residues 158 to 177, 220 to 232, 256 to 306, 328 to 344, 364 to 380, and 414 to 428; these read EGTS…TSVV, LSTS…TEGL, RSTT…GPST, LSTS…STSV, RSTS…DTSV, and TLFS…NPSK. MAGE domains follow at residues 491-690 and 745-936; these read MEQN…YNEA and LESK…YREA. An interaction with DTNA region spans residues 743–957; that stretch reads SRLESKARKL…HRQFFVHNFR (215 aa).

In terms of assembly, interacts with DTNA. Interacts with TRIM28.

The protein resides in the cytoplasm. It is found in the perinuclear region. Its subcellular location is the nucleus. It localises to the cell membrane. Its function is as follows. May enhance ubiquitin ligase activity of RING-type zinc finger-containing E3 ubiquitin-protein ligases. Proposed to act through recruitment and/or stabilization of the Ubl-conjugating enzyme (E2) at the E3:substrate complex. The chain is Melanoma-associated antigen E1 (MAGEE1) from Macaca fascicularis (Crab-eating macaque).